We begin with the raw amino-acid sequence, 181 residues long: Ferritin heavy chain (181 aa).

Residues 10 to 159 (QNYHQDCEAA…DHVTNLRKMG (150 aa)) form the Ferritin-like diiron domain. Fe cation-binding residues include E27, E62, H65, E107, and Q141.

It belongs to the ferritin family. Oligomer of 24 subunits. There are two types of subunits: L (light) chain and H (heavy) chain. The major chain can be light or heavy, depending on the species and tissue type. The functional molecule forms a roughly spherical shell with a diameter of 12 nm and contains a central cavity into which the insoluble mineral iron core is deposited. Expressed in erythroblasts (at protein level). Expressed in heart, liver, spleen, lung, kidney, large intestine, small intestine, muscle, glandular stomach, ovary and oviduct.

The protein localises to the cytoplasm. It localises to the lysosome. It is found in the cytoplasmic vesicle. Its subcellular location is the autophagosome. The enzyme catalyses 4 Fe(2+) + O2 + 4 H(+) = 4 Fe(3+) + 2 H2O. Stores iron in a soluble, non-toxic, readily available form. Important for iron homeostasis. Has ferroxidase activity. Iron is taken up in the ferrous form and deposited as ferric hydroxides after oxidation. Also plays a role in delivery of iron to cells. Mediates iron uptake in capsule cells of the developing kidney. Delivery to lysosomes is mediated by the cargo receptor NCOA4 for autophagic degradation and release of iron. In terms of biological role, inhibits translation of various mRNA species in vitro. Associates with a 35S prosome-like particle that contains non-translated mRNAs in a complex with proteins. May be involved in pre-translational regulation of some mRNA. This Anas platyrhynchos (Mallard) protein is Ferritin heavy chain.